Consider the following 478-residue polypeptide: Cytochrome P450 monooxygenase ATR3 (478 aa).

Residues 20-42 (AVAFVTASALYYVLPAAISHIQL) traverse the membrane as a helical segment. Residues Asn-159 and Asn-268 are each glycosylated (N-linked (GlcNAc...) asparagine).

This sequence belongs to the cytochrome P450 family. Heme serves as cofactor.

Its subcellular location is the membrane. It functions in the pathway mycotoxin biosynthesis. Its function is as follows. Cytochrome P450 monooxygenase; part of the core atranone cluster (CAC) which products are predicted to catalyze most or all steps of mycotoxin atranone synthesis, starting from geranylgeranyl pyrophosphate (GGPP). The initial cyclization of GGPP to dolabellane is probably performed by the terpene cyclase ATR13. The Baeyer-Villiger oxidation near the end of the atranone synthesis, which converts atranones D and E to atranones F and G is predicted to be catalyzed by the monooxygenase ATR8. Of the CAC's other predicted gene products, the reducing PKS ATR6 might synthesize a polyketide chain. This polyketide is probably transferred onto the atranone backbone by the polyketide transferase ATR5. Other predicted CAC products include 4 oxygenases (ATR2, ATR3, ATR4, and ATR14), 3 short-chain reductases (ATR7, ATR9, and ATR10), and a methyltransferase (ATR12). These may all be involved in the various steps of atranone biosynthesis, although their specific roles must await experimental determination. This chain is Cytochrome P450 monooxygenase ATR3, found in Stachybotrys chlorohalonatus (strain IBT 40285).